A 276-amino-acid chain; its full sequence is Hydroxyethylthiazole kinase (276 aa).

2 residues coordinate ATP: arginine 126 and serine 172. Glycine 199 contributes to the substrate binding site.

This sequence belongs to the Thz kinase family. Mg(2+) is required as a cofactor.

It catalyses the reaction 5-(2-hydroxyethyl)-4-methylthiazole + ATP = 4-methyl-5-(2-phosphooxyethyl)-thiazole + ADP + H(+). The protein operates within cofactor biosynthesis; thiamine diphosphate biosynthesis; 4-methyl-5-(2-phosphoethyl)-thiazole from 5-(2-hydroxyethyl)-4-methylthiazole: step 1/1. Catalyzes the phosphorylation of the hydroxyl group of 4-methyl-5-beta-hydroxyethylthiazole (THZ). This is Hydroxyethylthiazole kinase from Burkholderia pseudomallei (strain 1710b).